We begin with the raw amino-acid sequence, 179 residues long: Ubiquitin-conjugating enzyme E2 2 (179 aa).

The interval 1 to 28 is disordered; that stretch reads MSTPARRRLMRDFKRMQQDPPSGVSASP. The region spanning 4–150 is the UBC core domain; the sequence is PARRRLMRDF…VRETVENSWN (147 aa). Residue Cys88 is the Glycyl thioester intermediate of the active site. The interval 145-179 is disordered; that stretch reads VENSWNDDDDEEEEEEDEDEAEDEDDDDDDNIDED. The span at 149 to 179 shows a compositional bias: acidic residues; that stretch reads WNDDDDEEEEEEDEDEAEDEDDDDDDNIDED. Residues 151 to 179 form an acidic tail region; sequence DDDDEEEEEEDEDEAEDEDDDDDDNIDED.

This sequence belongs to the ubiquitin-conjugating enzyme family.

It localises to the cytoplasm. The protein localises to the nucleus. It carries out the reaction S-ubiquitinyl-[E1 ubiquitin-activating enzyme]-L-cysteine + [E2 ubiquitin-conjugating enzyme]-L-cysteine = [E1 ubiquitin-activating enzyme]-L-cysteine + S-ubiquitinyl-[E2 ubiquitin-conjugating enzyme]-L-cysteine.. Its pathway is protein modification; protein ubiquitination. In terms of biological role, catalyzes the covalent attachment of ubiquitin to other proteins. Plays a role in transcription regulation by catalyzing the monoubiquitination of histone H2B to form H2BK123ub1. H2BK123ub1 gives a specific tag for epigenetic transcriptional activation and is also a prerequisite for H3K4me and H3K79me formation. Also involved in postreplication repair of UV-damaged DNA, in N-end rule-dependent protein degradation and in sporulation. This Candida albicans (strain SC5314 / ATCC MYA-2876) (Yeast) protein is Ubiquitin-conjugating enzyme E2 2 (UBC2).